Reading from the N-terminus, the 89-residue chain is Small ribosomal subunit protein bS20 (89 aa).

The tract at residues 1–25 (MANTPQSKKRARQLERRTAVNKARR) is disordered.

The protein belongs to the bacterial ribosomal protein bS20 family.

Binds directly to 16S ribosomal RNA. The chain is Small ribosomal subunit protein bS20 from Paracoccus denitrificans (strain Pd 1222).